Reading from the N-terminus, the 37-residue chain is Large ribosomal subunit protein bL36c (37 aa).

Belongs to the bacterial ribosomal protein bL36 family.

The protein localises to the plastid. It localises to the chloroplast. The sequence is that of Large ribosomal subunit protein bL36c from Ostreococcus tauri.